The chain runs to 145 residues: Hemoglobin subunit beta (145 aa).

Residues 1–145 (MLTAEEKAAV…VANALAHRYH (145 aa)) form the Globin domain. Threonine 11 is modified (phosphothreonine). A Phosphoserine modification is found at serine 43. N6-acetyllysine is present on lysine 58. Histidine 62 serves as a coordination point for heme b. Lysine 81 bears the N6-acetyllysine mark. Histidine 91 contacts heme b. Cysteine 92 carries the S-nitrosocysteine modification.

It belongs to the globin family. In terms of assembly, heterotetramer of two alpha chains and two beta chains. As to expression, red blood cells.

Functionally, involved in oxygen transport from the lung to the various peripheral tissues. Functions as an endogenous inhibitor of enkephalin-degrading enzymes such as DPP3, and may thereby play a role as a regulator of pain and inflammation. The protein is Hemoglobin subunit beta (HBB) of Bos taurus (Bovine).